Here is a 202-residue protein sequence, read N- to C-terminus: Large ribosomal subunit protein bL9 (202 aa).

The disordered stretch occupies residues 176–202 (AAGEFFDPDAQHDDEPAAEDDQNAEEK). The span at 191 to 202 (PAAEDDQNAEEK) shows a compositional bias: acidic residues.

The protein belongs to the bacterial ribosomal protein bL9 family.

In terms of biological role, binds to the 23S rRNA. This is Large ribosomal subunit protein bL9 from Nitrobacter winogradskyi (strain ATCC 25391 / DSM 10237 / CIP 104748 / NCIMB 11846 / Nb-255).